The sequence spans 327 residues: rRNA 2'-O-methyltransferase fibrillarin (327 aa).

Residues 1-95 are disordered; that stretch reads MKPGFSPRGG…NQSGKNVMVE (95 aa). Residues 7–80 are compositionally biased toward gly residues; that stretch reads PRGGGFGGRG…GGNRGRGGGR (74 aa). 6 positions are modified to asymmetric dimethylarginine: arginine 8, arginine 15, arginine 21, arginine 24, arginine 28, and arginine 31. Residues lysine 90, lysine 108, and lysine 115 each participate in a glycyl lysine isopeptide (Lys-Gly) (interchain with G-Cter in SUMO2) cross-link. Residue lysine 108 is modified to N6-acetyllysine. Serine 122 carries the post-translational modification Phosphoserine. Residue lysine 127 is modified to N6-acetyllysine. A phosphoserine mark is found at serine 130 and serine 132. Residues lysine 137, lysine 149, and lysine 164 each participate in a glycyl lysine isopeptide (Lys-Gly) (interchain with G-Cter in SUMO2) cross-link. Residues 178–179 and 197–198 each bind S-adenosyl-L-methionine; these read TT and EF. Residues lysine 211 and lysine 212 each carry the N6-acetyllysine modification. S-adenosyl-L-methionine contacts are provided by residues 222-223 and 242-245; these read DA and DVAQ.

It belongs to the methyltransferase superfamily. Fibrillarin family. In terms of assembly, component of box C/D small nucleolar ribonucleoprotein (snoRNP) particles that contain SNU13, FBL, NOP5 and NOP56, plus a guide RNA. It is associated with the U3, U8, U13, X and Y small nuclear RNAs. Component of several ribosomal and nucleolar protein complexes. Part of the small subunit (SSU) processome, composed of more than 70 proteins and the RNA chaperone small nucleolar RNA (snoRNA) U3. Interacts with PRMT5 and UTP20. Interacts with DDX5 and C1QBP. Interacts with NOL11. Interacts with PIH1D1. Interacts with RRP1B. Interacts with NOLC1. Interacts with SDE2. Interacts with NOP2 and NOP56. Post-translationally, by homology to other fibrillarins, some or all of the N-terminal domain arginines are modified to asymmetric dimethylarginine (DMA). In terms of processing, ubiquitinated. Ubiquitination leads to proteasomal degradation. Deubiquitinated by USP36. Acetylated by CREBBP/CBP, preventing methylation of 'Gln-105' of histone H2A (H2AQ104me), without affecting rRNA methylation. Deacetylation by SIRT7 restores methylation of 'Gln-105' of histone H2A (H2AQ104me).

Its subcellular location is the nucleus. The protein localises to the nucleolus. The protein resides in the nucleoplasm. The enzyme catalyses L-glutaminyl-[histone H2A] + S-adenosyl-L-methionine = N(5)-methyl-L-glutaminyl-[histone H2A] + S-adenosyl-L-homocysteine + H(+). It catalyses the reaction a ribonucleotide in rRNA + S-adenosyl-L-methionine = a 2'-O-methylribonucleotide in rRNA + S-adenosyl-L-homocysteine + H(+). It carries out the reaction a ribonucleotide in U6 snRNA + S-adenosyl-L-methionine = a 2'-O-methylribonucleotide in U6 snRNA + S-adenosyl-L-homocysteine + H(+). S-adenosyl-L-methionine-dependent methyltransferase that has the ability to methylate both RNAs and proteins. Involved in pre-rRNA processing by catalyzing the site-specific 2'-hydroxyl methylation of ribose moieties in pre-ribosomal RNA. Site specificity is provided by a guide RNA that base pairs with the substrate. Methylation occurs at a characteristic distance from the sequence involved in base pairing with the guide RNA. Probably catalyzes 2'-O-methylation of U6 snRNAs in box C/D RNP complexes. U6 snRNA 2'-O-methylation is required for mRNA splicing fidelity. Also acts as a protein methyltransferase by mediating methylation of 'Gln-105' of histone H2A (H2AQ104me), a modification that impairs binding of the FACT complex and is specifically present at 35S ribosomal DNA locus. Part of the small subunit (SSU) processome, first precursor of the small eukaryotic ribosomal subunit. During the assembly of the SSU processome in the nucleolus, many ribosome biogenesis factors, an RNA chaperone and ribosomal proteins associate with the nascent pre-rRNA and work in concert to generate RNA folding, modifications, rearrangements and cleavage as well as targeted degradation of pre-ribosomal RNA by the RNA exosome. This is rRNA 2'-O-methyltransferase fibrillarin from Mus musculus (Mouse).